The chain runs to 190 residues: FMN reductase (NADH) RutF (190 aa).

The protein belongs to the non-flavoprotein flavin reductase family. RutF subfamily.

It catalyses the reaction FMNH2 + NAD(+) = FMN + NADH + 2 H(+). Its function is as follows. Catalyzes the reduction of FMN to FMNH2 which is used to reduce pyrimidine by RutA via the Rut pathway. The sequence is that of FMN reductase (NADH) RutF from Pantoea ananatis (strain LMG 20103).